The following is a 164-amino-acid chain: 6,7-dimethyl-8-ribityllumazine synthase (164 aa).

Residues Tyr-27, 58–60 (ALE), and 87–89 (CVI) each bind 5-amino-6-(D-ribitylamino)uracil. Residue 92–93 (ET) coordinates (2S)-2-hydroxy-3-oxobutyl phosphate. His-95 functions as the Proton donor in the catalytic mechanism. A 5-amino-6-(D-ribitylamino)uracil-binding site is contributed by Asn-120. Arg-134 contacts (2S)-2-hydroxy-3-oxobutyl phosphate.

It belongs to the DMRL synthase family.

It carries out the reaction (2S)-2-hydroxy-3-oxobutyl phosphate + 5-amino-6-(D-ribitylamino)uracil = 6,7-dimethyl-8-(1-D-ribityl)lumazine + phosphate + 2 H2O + H(+). It functions in the pathway cofactor biosynthesis; riboflavin biosynthesis; riboflavin from 2-hydroxy-3-oxobutyl phosphate and 5-amino-6-(D-ribitylamino)uracil: step 1/2. Catalyzes the formation of 6,7-dimethyl-8-ribityllumazine by condensation of 5-amino-6-(D-ribitylamino)uracil with 3,4-dihydroxy-2-butanone 4-phosphate. This is the penultimate step in the biosynthesis of riboflavin. The protein is 6,7-dimethyl-8-ribityllumazine synthase of Methylocella silvestris (strain DSM 15510 / CIP 108128 / LMG 27833 / NCIMB 13906 / BL2).